Here is an 847-residue protein sequence, read N- to C-terminus: Leucine--tRNA ligase (847 aa).

The short motif at 41 to 51 is the 'HIGH' region element; sequence PYPSGRIHMGH. Residues 619–623 carry the 'KMSKS' region motif; that stretch reads KMSKS. Lys-622 is a binding site for ATP.

The protein belongs to the class-I aminoacyl-tRNA synthetase family.

Its subcellular location is the cytoplasm. The catalysed reaction is tRNA(Leu) + L-leucine + ATP = L-leucyl-tRNA(Leu) + AMP + diphosphate. In Cereibacter sphaeroides (strain ATCC 17023 / DSM 158 / JCM 6121 / CCUG 31486 / LMG 2827 / NBRC 12203 / NCIMB 8253 / ATH 2.4.1.) (Rhodobacter sphaeroides), this protein is Leucine--tRNA ligase.